Here is a 507-residue protein sequence, read N- to C-terminus: Fumarate hydratase, mitochondrial (507 aa).

Residues 1 to 41 constitute a mitochondrion transit peptide; sequence MNRAFCLLARSRRFPRVPSAGAVLSGEAATLPRCAPNVVRM. Lysine 58, lysine 63, and lysine 77 each carry N6-acetyllysine; alternate. N6-succinyllysine; alternate occurs at positions 58, 63, and 77. A Phosphothreonine modification is found at threonine 82. Lysine 91 carries the post-translational modification N6-acetyllysine. N6-acetyllysine; alternate occurs at positions 112 and 119. An N6-succinyllysine; alternate mark is found at lysine 112 and lysine 119. Substrate-binding positions include 142–144, 173–176, and 183–185; these read SGT, HPND, and SSN. N6-acetyllysine is present on lysine 210. Lysine 220 is modified (N6-acetyllysine; alternate). Residue lysine 220 is modified to N6-succinyllysine; alternate. Position 231 (threonine 231) interacts with substrate. Histidine 232 serves as the catalytic Proton donor/acceptor. Residue threonine 233 is modified to Phosphothreonine. At lysine 289 the chain carries N6-acetyllysine; alternate. Lysine 289 carries the post-translational modification N6-succinyllysine; alternate. Residue serine 362 is part of the active site. Residues serine 363 and 368–370 each bind substrate; that span reads KVN. The residue at position 363 (serine 363) is a Phosphoserine. Residues lysine 464 and lysine 470 each carry the N6-succinyllysine modification. Lysine 499 carries the post-translational modification N6-acetyllysine.

The protein belongs to the class-II fumarase/aspartase family. Fumarase subfamily. As to quaternary structure, homotetramer. Interacts with H2AZ1. Phosphorylation at Thr-233 by PRKDC in response to DNA damage promotes translocation to the nucleus and recruitment to DNA double-strand breaks (DSBs).

The protein localises to the mitochondrion. It localises to the cytoplasm. It is found in the cytosol. Its subcellular location is the nucleus. The protein resides in the chromosome. It carries out the reaction (S)-malate = fumarate + H2O. The protein operates within carbohydrate metabolism; tricarboxylic acid cycle; (S)-malate from fumarate: step 1/1. In terms of biological role, catalyzes the reversible stereospecific interconversion of fumarate to L-malate. Experiments in other species have demonstrated that specific isoforms of this protein act in defined pathways and favor one direction over the other. Functionally, catalyzes the hydration of fumarate to L-malate in the tricarboxylic acid (TCA) cycle to facilitate a transition step in the production of energy in the form of NADH. Catalyzes the dehydration of L-malate to fumarate. Fumarate metabolism in the cytosol plays a role during urea cycle and arginine metabolism; fumarate being a by-product of the urea cycle and amino-acid catabolism. Also plays a role in DNA repair by promoting non-homologous end-joining (NHEJ). In response to DNA damage and phosphorylation by PRKDC, translocates to the nucleus and accumulates at DNA double-strand breaks (DSBs): acts by catalyzing formation of fumarate, an inhibitor of KDM2B histone demethylase activity, resulting in enhanced dimethylation of histone H3 'Lys-36' (H3K36me2). This Rattus norvegicus (Rat) protein is Fumarate hydratase, mitochondrial.